Here is a 194-residue protein sequence, read N- to C-terminus: FMN-dependent NADH:quinone oxidoreductase (194 aa).

FMN is bound by residues serine 10, 16–18, 91–94, and 135–138; these read SQS, MYNF, and TRGG.

Belongs to the azoreductase type 1 family. Homodimer. Requires FMN as cofactor.

The enzyme catalyses 2 a quinone + NADH + H(+) = 2 a 1,4-benzosemiquinone + NAD(+). It catalyses the reaction N,N-dimethyl-1,4-phenylenediamine + anthranilate + 2 NAD(+) = 2-(4-dimethylaminophenyl)diazenylbenzoate + 2 NADH + 2 H(+). Functionally, quinone reductase that provides resistance to thiol-specific stress caused by electrophilic quinones. In terms of biological role, also exhibits azoreductase activity. Catalyzes the reductive cleavage of the azo bond in aromatic azo compounds to the corresponding amines. This Vibrio parahaemolyticus serotype O3:K6 (strain RIMD 2210633) protein is FMN-dependent NADH:quinone oxidoreductase.